We begin with the raw amino-acid sequence, 58 residues long: MDVPYDLNSYIRVLKLASTPSTDEFLQVSKIAGAGILLIGFIGFLMFAIMSLLPGVGA.

The chain crosses the membrane as a helical span at residues 36–56 (ILLIGFIGFLMFAIMSLLPGV).

The protein belongs to the SecE/SEC61-gamma family. As to quaternary structure, component of the Sec protein translocase complex. Heterotrimer consisting of SecY (alpha), SecG (beta) and SecE (gamma) subunits. The heterotrimers can form oligomers, although 1 heterotrimer is thought to be able to translocate proteins. Interacts with the ribosome. May interact with SecDF, and other proteins may be involved.

The protein localises to the cell membrane. Essential subunit of the Sec protein translocation channel SecYEG. Clamps together the 2 halves of SecY. May contact the channel plug during translocation. The sequence is that of Protein translocase subunit SecE from Halorubrum lacusprofundi (strain ATCC 49239 / DSM 5036 / JCM 8891 / ACAM 34).